An 884-amino-acid chain; its full sequence is Alanine--tRNA ligase (884 aa).

Zn(2+) is bound by residues His-562, His-566, Cys-674, and His-678.

This sequence belongs to the class-II aminoacyl-tRNA synthetase family. Requires Zn(2+) as cofactor.

It localises to the cytoplasm. The enzyme catalyses tRNA(Ala) + L-alanine + ATP = L-alanyl-tRNA(Ala) + AMP + diphosphate. In terms of biological role, catalyzes the attachment of alanine to tRNA(Ala) in a two-step reaction: alanine is first activated by ATP to form Ala-AMP and then transferred to the acceptor end of tRNA(Ala). Also edits incorrectly charged Ser-tRNA(Ala) and Gly-tRNA(Ala) via its editing domain. This is Alanine--tRNA ligase from Rhizobium etli (strain ATCC 51251 / DSM 11541 / JCM 21823 / NBRC 15573 / CFN 42).